The sequence spans 184 residues: Inosine triphosphate pyrophosphatase (184 aa).

9–14 provides a ligand contact to ITP; it reads TSNASK. Glu38 is a binding site for Mg(2+). ITP-binding positions include Lys50, 66-67, Lys83, 142-145, Lys163, and 168-169; these read DT, FGWD, and HR.

This sequence belongs to the HAM1 NTPase family. In terms of assembly, homodimer. Mg(2+) is required as a cofactor. Requires Mn(2+) as cofactor.

It localises to the cytoplasm. It is found in the nucleus. It carries out the reaction ITP + H2O = IMP + diphosphate + H(+). The catalysed reaction is dITP + H2O = dIMP + diphosphate + H(+). The enzyme catalyses XTP + H2O = XMP + diphosphate + H(+). In terms of biological role, pyrophosphatase that hydrolyzes non-canonical purine nucleotides such as inosine triphosphate (ITP), deoxyinosine triphosphate (dITP) or xanthosine 5'-triphosphate (XTP) to their respective monophosphate derivatives. The enzyme does not distinguish between the deoxy- and ribose forms. Probably excludes non-canonical purines from RNA and DNA precursor pools, thus preventing their incorporation into RNA and DNA and avoiding chromosomal lesions. In Tuber melanosporum (strain Mel28) (Perigord black truffle), this protein is Inosine triphosphate pyrophosphatase.